Here is a 225-residue protein sequence, read N- to C-terminus: MEKKISIAIDGPAAAGKSTVAKRLAEALSYVYIDTGAMYRALTYCALQRGVDVHNEKQLMNVLHDTYIELKPSPSGQLVFANGENVTEAIRTNDVTNNVSYVAKHPAVREEMVKRQRELGQHGGVVMDGRDIGTHVLPHAEVKIFLLASVEERAKRRHEENVLRGIPSDFEQLKEEIARRDQIDSERAVAPLKKAEDAIEIDTTSLSIDEVVDRIMCIVQERVEG.

11–19 is a binding site for ATP; sequence GPAAAGKST.

This sequence belongs to the cytidylate kinase family. Type 1 subfamily.

Its subcellular location is the cytoplasm. It carries out the reaction CMP + ATP = CDP + ADP. The catalysed reaction is dCMP + ATP = dCDP + ADP. This Anoxybacillus flavithermus (strain DSM 21510 / WK1) protein is Cytidylate kinase.